The primary structure comprises 538 residues: Reticuline oxidase (538 aa).

The signal sequence occupies residues 1–23 (MENKTPIFFSLSIFLSLLNCALG). Cys-30 and Cys-89 are joined by a disulfide. The N-linked (GlcNAc...) asparagine glycan is linked to Asn-38. In terms of domain architecture, FAD-binding PCMH-type spans 67 to 241 (LISKPSAIIL…YAWKIKLLPV (175 aa)). Residues 104–166 (HSYEGLSYTS…SKLGFTAGWC (63 aa)) constitute a cross-link (6-(S-cysteinyl)-8alpha-(pros-histidyl)-FAD (His-Cys)). Residues Asn-423 and Asn-471 are each glycosylated (N-linked (GlcNAc...) asparagine).

The protein belongs to the oxygen-dependent FAD-linked oxidoreductase family. It depends on FAD as a cofactor. A metal cation serves as cofactor. The FAD cofactor is bound via a bicovalent 6-S-cysteinyl, 8alpha-N1-histidyl FAD linkage.

Its subcellular location is the cytoplasmic vesicle. It carries out the reaction (S)-reticuline + O2 = (S)-scoulerine + H2O2 + H(+). It functions in the pathway alkaloid biosynthesis; (S)-scoulerine biosynthesis; (S)-scoulerine from (S)-reticuline: step 1/1. Essential to the formation of benzophenanthridine alkaloids in the response of plants to pathogenic attack. Catalyzes the stereospecific conversion of the N-methyl moiety of (S)-reticuline into the berberine bridge carbon of (S)-scoulerine. The chain is Reticuline oxidase (BBE1) from Eschscholzia californica (California poppy).